A 114-amino-acid polypeptide reads, in one-letter code: Fumarate reductase subunit D (114 aa).

The next 3 membrane-spanning stretches (helical) occupy residues 27-47 (ICFPVLILILGILLPLGLIPM), 50-70 (IIVFAHTWLGKLVILAVTIFP), and 94-114 (WLFYGLSTLYSIVVLFAVIAL).

This sequence belongs to the FrdD family. In terms of assembly, part of an enzyme complex containing four subunits: a flavoprotein (FrdA), an iron-sulfur protein (FrdB), and two hydrophobic anchor proteins (FrdC and FrdD).

It localises to the cell inner membrane. Functionally, anchors the catalytic components of the fumarate reductase complex to the cell membrane, binds quinones. The chain is Fumarate reductase subunit D from Haemophilus ducreyi (strain 35000HP / ATCC 700724).